The sequence spans 359 residues: tRNA-specific 2-thiouridylase MnmA (359 aa).

Residues 9–16 and Met35 contribute to the ATP site; that span reads GISGGVDS. The segment at 95–97 is interaction with target base in tRNA; it reads NPD. Cys100 serves as the catalytic Nucleophile. An intrachain disulfide couples Cys100 to Cys197. Residue Gly124 participates in ATP binding. The interaction with tRNA stretch occupies residues 147-149; it reads KDQ. Residue Cys197 is the Cysteine persulfide intermediate of the active site. The interaction with tRNA stretch occupies residues 309–310; the sequence is RY.

The protein belongs to the MnmA/TRMU family.

It is found in the cytoplasm. The catalysed reaction is S-sulfanyl-L-cysteinyl-[protein] + uridine(34) in tRNA + AH2 + ATP = 2-thiouridine(34) in tRNA + L-cysteinyl-[protein] + A + AMP + diphosphate + H(+). Its function is as follows. Catalyzes the 2-thiolation of uridine at the wobble position (U34) of tRNA, leading to the formation of s(2)U34. The chain is tRNA-specific 2-thiouridylase MnmA from Francisella tularensis subsp. novicida (strain U112).